Here is a 663-residue protein sequence, read N- to C-terminus: Protein MICRORCHIDIA 6 (663 aa).

The segment at 1–77 (MSHDRSVNVS…PADDAGVTSS (77 aa)) is disordered. Residues 49–62 (SVGQSAGQSSTSVV) are compositionally biased toward polar residues. A Nuclear localization signal motif is present at residues 552–559 (KRKEHPDS). The stretch at 614–659 (DRKVRSQNLEVKAMNLRSELENYKSEYERLMVELQALDLVKDEHRR) forms a coiled coil.

The protein belongs to the MORC ATPase protein family. Homodimer and heterodimers with MORC1/CRT1 and MORC2. Interacts directly with SUVH9. Component of an RNA-directed DNA methylation (RdDM) complex that contains at least MORC6, MORC1/CRT1, MORC2, SWI3D and SUVH9. Stimulated by interaction with DMS3. Interacts with IDN2, SWI3B, SWI3C and SWI3D. The cofactor is Mg(2+). Mn(2+) is required as a cofactor.

The protein localises to the nucleus. With respect to regulation, stimulated by DMS3. Its function is as follows. Involved in RNA-directed DNA methylation (RdDM) as a component of the RdDM machinery and required for gene silencing. Together with SUVH2 and SUVH9, regulates the silencing of some transposable elements (TEs). Exhibits ATPase activity. May also be involved in the regulation of chromatin architecture/condensation to maintain gene silencing. Binds DNA/RNA in a non-specific manner and exhibits endonuclease activity. Probably involved in DNA repair. Positive regulator of defense against the oomycete Hyaloperonospora arabidopsidis (Hpa). In Arabidopsis thaliana (Mouse-ear cress), this protein is Protein MICRORCHIDIA 6.